Reading from the N-terminus, the 1072-residue chain is 5'-3' exoribonuclease 2 (1072 aa).

A coiled-coil region spans residues 118-144 (RRFRAAREAMEKEEDKQKFVELLKKQN). The CCHC-type zinc finger occupies 269 to 286 (RLCKICGQKGHDAMNCKG). The segment covering 414–435 (KETEDRREAGFKRRKLADEARQ) has biased composition (basic and acidic residues). 4 disordered regions span residues 414 to 459 (KETE…GFSF), 509 to 577 (QGTS…AEPT), 865 to 911 (ASRS…GGGG), and 943 to 1072 (GGGY…RGYR). A compositionally biased stretch (low complexity) spans 518–543 (AESTETPAETAAAAPATEEQAAPPAA). Over residues 892–911 (GPGGGQQGGRGRGGYQGGGG) the composition is skewed to gly residues. The span at 955–967 (GPPPGWQPPPPPG) shows a compositional bias: pro residues. 3 stretches are compositionally biased toward gly residues: residues 983 to 1000 (AYGG…GSSR), 1025 to 1036 (YGQGGSRGGYQG), and 1056 to 1072 (GYRG…RGYR).

This sequence belongs to the 5'-3' exonuclease family. XRN2/RAT1 subfamily. In terms of assembly, interacts with rai1; the interaction is direct, stabilizes exr-1 protein structure and may stimulate its exoribonuclease activity. The interaction also stimulates rai1 pyrophosphohydrolase activity, probably by recruiting it to mRNA substrates.

Its subcellular location is the nucleus. Its function is as follows. Possesses 5'-&gt;3' exoribonuclease activity. Required for the processing of nuclear mRNA and rRNA precursors. May promote the termination of transcription by RNA polymerase II. Essential for vegetative cell growth and chromosome segregation. This Neurospora crassa (strain ATCC 24698 / 74-OR23-1A / CBS 708.71 / DSM 1257 / FGSC 987) protein is 5'-3' exoribonuclease 2 (exr-1).